A 279-amino-acid chain; its full sequence is uncharacterized protein (279 aa).

A Reverse transcriptase domain is found at 1–87 (MRVNGRNLTN…DEYIYLGRQI (87 aa)).

This is an uncharacterized protein from Caenorhabditis elegans.